We begin with the raw amino-acid sequence, 202 residues long: MKLLHIDSSVLGPHSVSRQVSAAIVDRLRQATPSLEVVYRDLTQTPLAHLSGSHLAAAQGAPAPAELGPDLAASAAVLNEFLAADVVVIGAPMYNFTIPSQLKAWIDRILVAGKTFQYGANGPQGLAGAKRVIVAISRGGYYGADMPTAAGEHLETYLRWVFGFIGITDPEFISADGIQVGPDHREKALAGALQAATSLQAA.

FMN-binding positions include Ser9, 15–17 (SVS), 93–96 (MYNF), and 137–140 (SRGG).

It belongs to the azoreductase type 1 family. As to quaternary structure, homodimer. The cofactor is FMN.

It carries out the reaction 2 a quinone + NADH + H(+) = 2 a 1,4-benzosemiquinone + NAD(+). The enzyme catalyses N,N-dimethyl-1,4-phenylenediamine + anthranilate + 2 NAD(+) = 2-(4-dimethylaminophenyl)diazenylbenzoate + 2 NADH + 2 H(+). Functionally, quinone reductase that provides resistance to thiol-specific stress caused by electrophilic quinones. Also exhibits azoreductase activity. Catalyzes the reductive cleavage of the azo bond in aromatic azo compounds to the corresponding amines. This chain is FMN-dependent NADH:quinone oxidoreductase 2, found in Bradyrhizobium diazoefficiens (strain JCM 10833 / BCRC 13528 / IAM 13628 / NBRC 14792 / USDA 110).